The sequence spans 172 residues: Large ribosomal subunit protein uL10 (172 aa).

The protein belongs to the universal ribosomal protein uL10 family. Part of the ribosomal stalk of the 50S ribosomal subunit. The N-terminus interacts with L11 and the large rRNA to form the base of the stalk. The C-terminus forms an elongated spine to which L12 dimers bind in a sequential fashion forming a multimeric L10(L12)X complex.

Forms part of the ribosomal stalk, playing a central role in the interaction of the ribosome with GTP-bound translation factors. The chain is Large ribosomal subunit protein uL10 from Francisella philomiragia subsp. philomiragia (strain ATCC 25017 / CCUG 19701 / FSC 153 / O#319-036).